We begin with the raw amino-acid sequence, 325 residues long: MKNFKYFAQSYVDWVIRLGRLRFSLLGVMILAVLALCTQILFSLFIVHQISWVDIFRSVTFGLLTAPFVIYFFTLLVEKLEHSRLDLSSSVNRLENEVAERIAAQKKLSQALEKLEKNSRDKSTLLATISHEFRTPLNGIVGLSQILLDDELDDLQRNYLKTINISAVSLGYIFSDIIDLEKIDASRIELNRQPTDFPALLNDIYNFASFLAKEKNLIFSLELEPNLPNWLNLDRVRLSQILWNLISNAVKFTDQGNIILKIMRNQDCYHFIVKDTGMGISPEEQKHIFEMYYQVKESRQQSAGSGIGLAISKNLAQLMGRGFNS.

Topologically, residues 1–26 (MKNFKYFAQSYVDWVIRLGRLRFSLL) are cytoplasmic. A helical membrane pass occupies residues 27-47 (GVMILAVLALCTQILFSLFIV). Over 48 to 57 (HQISWVDIFR) the chain is Periplasmic. Residues 58–78 (SVTFGLLTAPFVIYFFTLLVE) form a helical membrane-spanning segment. Residues 79–325 (KLEHSRLDLS…AQLMGRGFNS (247 aa)) are Cytoplasmic-facing. A Histidine kinase domain is found at 128–325 (TISHEFRTPL…AQLMGRGFNS (198 aa)). Position 131 is a phosphohistidine; by autocatalysis (His131).

It is found in the cell inner membrane. It catalyses the reaction ATP + protein L-histidine = ADP + protein N-phospho-L-histidine.. Its function is as follows. Member of the two-component regulatory system ArcB/ArcA. Activates ArcA by phosphorylation. This Haemophilus influenzae (strain ATCC 51907 / DSM 11121 / KW20 / Rd) protein is Aerobic respiration control sensor protein ArcB homolog (arcB).